Here is a 99-residue protein sequence, read N- to C-terminus: Phosphoribosyl-ATP pyrophosphatase (99 aa).

The protein belongs to the PRA-PH family.

The protein localises to the cytoplasm. It carries out the reaction 1-(5-phospho-beta-D-ribosyl)-ATP + H2O = 1-(5-phospho-beta-D-ribosyl)-5'-AMP + diphosphate + H(+). The protein operates within amino-acid biosynthesis; L-histidine biosynthesis; L-histidine from 5-phospho-alpha-D-ribose 1-diphosphate: step 2/9. The chain is Phosphoribosyl-ATP pyrophosphatase from Methanosphaerula palustris (strain ATCC BAA-1556 / DSM 19958 / E1-9c).